Consider the following 311-residue polypeptide: Formimidoylglutamase (311 aa).

Residues H122, D151, H153, D155, C242, and D244 each contribute to the Mn(2+) site.

The protein belongs to the arginase family. Mn(2+) is required as a cofactor.

It carries out the reaction N-formimidoyl-L-glutamate + H2O = formamide + L-glutamate. It functions in the pathway amino-acid degradation; L-histidine degradation into L-glutamate; L-glutamate from N-formimidoyl-L-glutamate (hydrolase route): step 1/1. Catalyzes the conversion of N-formimidoyl-L-glutamate to L-glutamate and formamide. This Pseudomonas paraeruginosa (strain DSM 24068 / PA7) (Pseudomonas aeruginosa (strain PA7)) protein is Formimidoylglutamase.